Here is a 555-residue protein sequence, read N- to C-terminus: Benzoyl-CoA-dihydrodiol lyase (555 aa).

Belongs to the benzoyl-CoA oxygenase component C family. As to quaternary structure, homodimer.

It catalyses the reaction 2,3-epoxy-2,3-dihydrobenzoyl-CoA + 2 H2O = (3Z)-6-oxohex-3-enoyl-CoA + formate + H(+). Catalyzes the ring opening of 2,3-epoxy-2,3-dihydroxybenzoyl-CoA to form 3,4-didehydroadipyl-CoA semialdehyde. In Aromatoleum evansii (Azoarcus evansii), this protein is Benzoyl-CoA-dihydrodiol lyase (boxC).